We begin with the raw amino-acid sequence, 115 residues long: Large ribosomal subunit protein uL22 (115 aa).

Belongs to the universal ribosomal protein uL22 family. As to quaternary structure, part of the 50S ribosomal subunit.

Its function is as follows. This protein binds specifically to 23S rRNA; its binding is stimulated by other ribosomal proteins, e.g. L4, L17, and L20. It is important during the early stages of 50S assembly. It makes multiple contacts with different domains of the 23S rRNA in the assembled 50S subunit and ribosome. The globular domain of the protein is located near the polypeptide exit tunnel on the outside of the subunit, while an extended beta-hairpin is found that lines the wall of the exit tunnel in the center of the 70S ribosome. The sequence is that of Large ribosomal subunit protein uL22 from Nitrosospira multiformis (strain ATCC 25196 / NCIMB 11849 / C 71).